The sequence spans 454 residues: ESX-1 secretion-associated protein EspB (454 aa).

3 disordered regions span residues 17-40 (RADEVEAPMATPPTDVPQAPSGLT), 82-128 (GEVE…AGES), and 391-454 (AGQG…QDNK). Residues 391–422 (AGQGGGAAGRGMAGGGMGMPMGGAGQGQGGAK) are compositionally biased toward gly residues.

The protein belongs to the EspB family. In terms of processing, cleaved at close to the C-terminus during secretion.

The protein localises to the secreted. The chain is ESX-1 secretion-associated protein EspB from Mycobacterium marinum (strain ATCC BAA-535 / M).